A 191-amino-acid polypeptide reads, in one-letter code: Guanylate kinase (191 aa).

The 179-residue stretch at 9–187 (GQLIVITGPS…SLIALETAIF (179 aa)) folds into the Guanylate kinase-like domain. Position 16–23 (16–23 (GPSGVGKG)) interacts with ATP.

The protein belongs to the guanylate kinase family.

It is found in the cytoplasm. It catalyses the reaction GMP + ATP = GDP + ADP. In terms of biological role, essential for recycling GMP and indirectly, cGMP. The chain is Guanylate kinase from Thermosynechococcus vestitus (strain NIES-2133 / IAM M-273 / BP-1).